The chain runs to 274 residues: 2,3,4,5-tetrahydropyridine-2,6-dicarboxylate N-succinyltransferase (274 aa).

The substrate site is built by arginine 103 and aspartate 140.

It belongs to the transferase hexapeptide repeat family. In terms of assembly, homotrimer.

The protein resides in the cytoplasm. The catalysed reaction is (S)-2,3,4,5-tetrahydrodipicolinate + succinyl-CoA + H2O = (S)-2-succinylamino-6-oxoheptanedioate + CoA. It participates in amino-acid biosynthesis; L-lysine biosynthesis via DAP pathway; LL-2,6-diaminopimelate from (S)-tetrahydrodipicolinate (succinylase route): step 1/3. The chain is 2,3,4,5-tetrahydropyridine-2,6-dicarboxylate N-succinyltransferase from Haemophilus ducreyi (strain 35000HP / ATCC 700724).